A 385-amino-acid chain; its full sequence is MYAKGGKGSAVPSDSQAREKLALYVYEYLLHIGAQKSAQTFLSEIRWEKNITLGEPPGFLHSWWCVFWDLYCAAPDRREACEHSGEAKAFQDYSAAAAPSPVMGSMAPGDTMAAGSMAAGFFQGPPGSQPSPHNPNAPMMGPHGQPFMSPRFPGGPRPTLRMPSQPPAGLPGSQPLLPGAMEPSPRAQGHPSMGGPMQRVTPPRGMASVGPQSYGGGMRPPPNSLAGPGLPAMNMGPGVRGPWASPSGNSIPYSSSSPGSYTGPPGGGGPPGTPIMPSPGDSTNSSENMYTIMNPIGQGAGRANFPLGPGPEGPMAAMSAMEPHHVNGSLGSGDMDGLPKSSPGAVAGLSNAPGTPRDDGEMAAAGTFLHPFPSESYSPGMTMSV.

The residue at position 1 (Met1) is an N-acetylmethionine. A LisH domain is found at 17-49 (AREKLALYVYEYLLHIGAQKSAQTFLSEIRWEK). Disordered regions lie at residues 122–287 (FQGP…NSSE) and 331–363 (GSGD…GEMA). A compositionally biased stretch (low complexity) spans 245 to 263 (SPSGNSIPYSSSSPGSYTG). Residues 267–277 (GGGPPGTPIMP) show a composition bias toward pro residues. Ser341 is modified (phosphoserine). Thr355 bears the Phosphothreonine mark.

The protein resides in the nucleus. This Homo sapiens (Human) protein is Single-stranded DNA-binding protein 4 (SSBP4).